Reading from the N-terminus, the 336-residue chain is Protein-glutamate methylesterase/protein-glutamine glutaminase 3 (336 aa).

Positions Lys2 to Leu119 constitute a Response regulatory domain. Asp53 is modified (4-aspartylphosphate). The CheB-type methylesterase domain occupies Val147–Gln336. Catalysis depends on residues Ser159, His186, and Asp279.

Belongs to the CheB family. Post-translationally, phosphorylated by CheA. Phosphorylation of the N-terminal regulatory domain activates the methylesterase activity.

The protein localises to the cytoplasm. It carries out the reaction [protein]-L-glutamate 5-O-methyl ester + H2O = L-glutamyl-[protein] + methanol + H(+). The enzyme catalyses L-glutaminyl-[protein] + H2O = L-glutamyl-[protein] + NH4(+). In terms of biological role, involved in chemotaxis. Part of a chemotaxis signal transduction system that modulates chemotaxis in response to various stimuli. Catalyzes the demethylation of specific methylglutamate residues introduced into the chemoreceptors (methyl-accepting chemotaxis proteins or MCP) by CheR. Also mediates the irreversible deamidation of specific glutamine residues to glutamic acid. This Pseudomonas syringae pv. tomato (strain ATCC BAA-871 / DC3000) protein is Protein-glutamate methylesterase/protein-glutamine glutaminase 3.